The following is a 272-amino-acid chain: Putative hydro-lyase BRADO2538 (272 aa).

The protein belongs to the D-glutamate cyclase family.

In Bradyrhizobium sp. (strain ORS 278), this protein is Putative hydro-lyase BRADO2538.